Consider the following 630-residue polypeptide: 1-deoxy-D-xylulose-5-phosphate synthase (630 aa).

Residues H73 and 114–116 (SHA) contribute to the thiamine diphosphate site. A Mg(2+)-binding site is contributed by D146. Thiamine diphosphate is bound by residues 147-148 (GA), N176, F287, and E371. Mg(2+) is bound at residue N176.

This sequence belongs to the transketolase family. DXPS subfamily. As to quaternary structure, homodimer. Requires Mg(2+) as cofactor. Thiamine diphosphate serves as cofactor.

The catalysed reaction is D-glyceraldehyde 3-phosphate + pyruvate + H(+) = 1-deoxy-D-xylulose 5-phosphate + CO2. It functions in the pathway metabolic intermediate biosynthesis; 1-deoxy-D-xylulose 5-phosphate biosynthesis; 1-deoxy-D-xylulose 5-phosphate from D-glyceraldehyde 3-phosphate and pyruvate: step 1/1. In terms of biological role, catalyzes the acyloin condensation reaction between C atoms 2 and 3 of pyruvate and glyceraldehyde 3-phosphate to yield 1-deoxy-D-xylulose-5-phosphate (DXP). The protein is 1-deoxy-D-xylulose-5-phosphate synthase of Corynebacterium jeikeium (strain K411).